Here is a 436-residue protein sequence, read N- to C-terminus: Adenylosuccinate synthetase (436 aa).

Residues 21-27 (GDEGKGK) and 49-51 (GHT) contribute to the GTP site. Asp-22 functions as the Proton acceptor in the catalytic mechanism. Asp-22 and Gly-49 together coordinate Mg(2+). Residues 22–25 (DEGK), 47–50 (NAGH), Thr-135, Arg-149, Gln-230, Thr-245, and Arg-309 each bind IMP. His-50 serves as the catalytic Proton donor. Residue 305–311 (TTTGRPR) coordinates substrate. GTP is bound by residues Arg-311, 337 to 339 (KVD), and 423 to 425 (SSG).

Belongs to the adenylosuccinate synthetase family. In terms of assembly, homodimer. Requires Mg(2+) as cofactor.

The protein localises to the cytoplasm. The catalysed reaction is IMP + L-aspartate + GTP = N(6)-(1,2-dicarboxyethyl)-AMP + GDP + phosphate + 2 H(+). The protein operates within purine metabolism; AMP biosynthesis via de novo pathway; AMP from IMP: step 1/2. In terms of biological role, plays an important role in the de novo pathway of purine nucleotide biosynthesis. Catalyzes the first committed step in the biosynthesis of AMP from IMP. This is Adenylosuccinate synthetase from Thermoplasma volcanium (strain ATCC 51530 / DSM 4299 / JCM 9571 / NBRC 15438 / GSS1).